The sequence spans 665 residues: Golgi-associated RAB2B interactor protein 3 (665 aa).

Disordered stretches follow at residues 211 to 240 (EIRGEGDQNSRPQSSPTVSEATSAAFAGGE), 272 to 296 (AAAGTAGPAAGPAAGTAGPAAGTAG), and 480 to 590 (SEGY…GSVS). Residues 219–232 (NSRPQSSPTVSEAT) are compositionally biased toward polar residues. Basic and acidic residues predominate over residues 499–513 (EAKEKRERREKDRTS). Basic residues-rich tracts occupy residues 514 to 538 (SRKSSHHRRTGMSRHSSKDKSRKTS) and 554 to 566 (GHGRLRGKRHSSS). The Bipartite nuclear localization signal motif lies at 515 to 531 (RKSSHHRRTGMSRHSSK). Ser652 bears the Phosphoserine mark.

The protein belongs to the GARIN family. As to quaternary structure, interacts (via N-terminus) with RAB2B (in GTP-bound form). Interacts with FRG1. Expressed in adult spermatocytes and spermatids.

Its subcellular location is the golgi apparatus. It localises to the nucleus. The protein resides in the cajal body. Functionally, may be involved in RNA biogenesis. This chain is Golgi-associated RAB2B interactor protein 3, found in Mus musculus (Mouse).